A 154-amino-acid polypeptide reads, in one-letter code: Phospholipase A2 OS1 (154 aa).

An N-terminal signal peptide occupies residues 1-27; sequence MHPAHLLVLLAVCVSLLGAARIPPLPL. Cystine bridges form between Cys-38/Cys-104, Cys-54/Cys-153, Cys-56/Cys-72, Cys-71/Cys-132, Cys-78/Cys-125, Cys-88/Cys-118, and Cys-111/Cys-123. Ca(2+) contacts are provided by Gly-57 and Gly-59. Residue His-75 is part of the active site. Asp-76 serves as a coordination point for Ca(2+). Asp-126 is an active-site residue.

This sequence belongs to the phospholipase A2 family. Group I subfamily. D49 sub-subfamily. Monomer. The cofactor is Ca(2+). In terms of tissue distribution, expressed by the venom gland.

It is found in the secreted. The enzyme catalyses a 1,2-diacyl-sn-glycero-3-phosphocholine + H2O = a 1-acyl-sn-glycero-3-phosphocholine + a fatty acid + H(+). Snake venom phospholipase A2 (PLA2) that has a low specific activity on phospholipid substrates, and is neither neurotoxic, nor myotoxic. Induces endothelial cell migration which is mediated, at least in part, by its hydrolytic products. Shows antimalarial activity, but is not able to potently inhibit HIV-1 replication. Binds in a calcium-independent fashion with very high affinity to a muscle-type (M-type) PLA2 receptor, but is a very poor ligand for neuronal-type (N-type) receptors. PLA2 catalyzes the calcium-dependent hydrolysis of the 2-acyl groups in 3-sn-phosphoglycerides. This is Phospholipase A2 OS1 from Oxyuranus scutellatus scutellatus (Australian taipan).